The sequence spans 216 residues: Cell division protein SepF (216 aa).

The disordered stretch occupies residues 22-126 (EYVEEPDQAR…PVVDDGGPLA (105 aa)). Composition is skewed to basic and acidic residues over residues 28–50 (DQAR…REFV), 62–80 (SRRD…RPRV), and 106–118 (ARAE…RAPV).

The protein belongs to the SepF family. As to quaternary structure, homodimer. Interacts with FtsZ.

Its subcellular location is the cytoplasm. Its function is as follows. Cell division protein that is part of the divisome complex and is recruited early to the Z-ring. Probably stimulates Z-ring formation, perhaps through the cross-linking of FtsZ protofilaments. Its function overlaps with FtsA. The chain is Cell division protein SepF from Rhodococcus erythropolis (strain PR4 / NBRC 100887).